The sequence spans 196 residues: Large ribosomal subunit protein eL15 (196 aa).

Residues 69 to 98 (RKGGSRKQRHKAGRRSKRQGVNRLSRRKSI) are compositionally biased toward basic residues. 2 disordered regions span residues 69 to 100 (RKGGSRKQRHKAGRRSKRQGVNRLSRRKSIQR) and 161 to 196 (FRGLTSAGTKGRGQRTRGTGTEKTRPSVTGNDRQGK). The span at 186-196 (PSVTGNDRQGK) shows a compositional bias: polar residues.

It belongs to the eukaryotic ribosomal protein eL15 family.

The chain is Large ribosomal subunit protein eL15 from Halorubrum lacusprofundi (strain ATCC 49239 / DSM 5036 / JCM 8891 / ACAM 34).